The following is a 2190-amino-acid chain: Non-reducing polyketide synthase mapC' (2190 aa).

Residues Val-14–Gln-268 are N-terminal acylcarrier protein transacylase domain (SAT). Residues Ala-401–Glu-817 form the Ketosynthase family 3 (KS3) domain. Catalysis depends on for beta-ketoacyl synthase activity residues Cys-566, His-701, and His-740. Residues Cys-893 to Gly-1190 form a malonyl-CoA:ACP transacylase (MAT) domain region. Ser-979 serves as the catalytic For acyl/malonyl transferase activity. Positions Gly-1243–Ser-1375 are N-terminal hotdog fold. A PKS/mFAS DH domain is found at Gly-1243–Thr-1552. The interval Gln-1251–Ala-1556 is product template (PT) domain. His-1277 (proton acceptor; for dehydratase activity) is an active-site residue. The tract at residues Ala-1401–Thr-1552 is C-terminal hotdog fold. Residue Asp-1458 is the Proton donor; for dehydratase activity of the active site. The Carrier domain maps to Ala-1597–His-1671. Position 1631 is an O-(pantetheine 4'-phosphoryl)serine (Ser-1631). Residues Ala-1840–His-2187 are methyltransferase (CMeT) domain. Catalysis depends on for thioesterase activity residues Ser-1969, Asp-2127, and His-2159.

Its subcellular location is the cytoplasm. It localises to the cytosol. It catalyses the reaction 3 malonyl-CoA + acetyl-CoA + S-adenosyl-L-methionine + H(+) = 5-methylorsellinate + S-adenosyl-L-homocysteine + 3 CO2 + 4 CoA. It participates in secondary metabolite biosynthesis; terpenoid biosynthesis. Non-reducing polyketide synthase; part of the gene cluster that mediates the biosynthesis of mycophenolic acid (MPA), the first isolated antibiotic natural product in the world obtained from a culture of Penicillium brevicompactum in 1893. MpaC' catalyzes the synthesis of 5-methylorsellinic acid (5MOA) via the condensation of 1 acetyl-CoA starter unit with 3 malonyl-CoA units and one methylation step. The first step of the pathway is the synthesis of 5-methylorsellinic acid (5MOA) by the cytosolic polyketide synthase mpaC. 5MOA is then converted to the phthalide compound 5,7-dihydroxy-4,6-dimethylphthalide (DHMP) by the endoplasmic reticulum-bound cytochrome P450 monooxygenase mpaDE. MpaDE first catalyzes hydroxylation of 5-MOA to 4,6-dihydroxy-2-(hydroxymethyl)-3-methylbenzoic acid (DHMB). MpaDE then acts as a lactone synthase that catalyzes the ring closure to convert DHMB into DHMP. The next step is the prenylation of DHMP by the Golgi apparatus-associated prenyltransferase mpaA to yield farnesyl-DHMP (FDHMP). The ER-bound oxygenase mpaB then mediates the oxidative cleavage the C19-C20 double bond in FDHMP to yield FDHMP-3C via a mycophenolic aldehyde intermediate. The O-methyltransferase mpaG catalyzes the methylation of FDHMP-3C to yield MFDHMP-3C. After the cytosolic methylation of FDHMP-3C, MFDHMP-3C enters into peroxisomes probably via free diffusion due to its low molecular weight. Upon a peroxisomal CoA ligation reaction, catalyzed by a beta-oxidation component enzyme acyl-CoA ligase ACL891, MFDHMP-3C-CoA would then be restricted to peroxisomes for the following beta-oxidation pathway steps. The peroxisomal beta-oxidation machinery than converts MFDHMP-3C-CoA into MPA_CoA, via a beta-oxidation chain-shortening process. Finally mpaH acts as a peroxisomal acyl-CoA hydrolase with high substrate specificity toward MPA-CoA to release the final product MPA. This is Non-reducing polyketide synthase mapC' from Penicillium brevicompactum.